The chain runs to 345 residues: S-adenosylmethionine:tRNA ribosyltransferase-isomerase (345 aa).

This sequence belongs to the QueA family. In terms of assembly, monomer.

The protein localises to the cytoplasm. The catalysed reaction is 7-aminomethyl-7-carbaguanosine(34) in tRNA + S-adenosyl-L-methionine = epoxyqueuosine(34) in tRNA + adenine + L-methionine + 2 H(+). Its pathway is tRNA modification; tRNA-queuosine biosynthesis. Its function is as follows. Transfers and isomerizes the ribose moiety from AdoMet to the 7-aminomethyl group of 7-deazaguanine (preQ1-tRNA) to give epoxyqueuosine (oQ-tRNA). This is S-adenosylmethionine:tRNA ribosyltransferase-isomerase from Shewanella woodyi (strain ATCC 51908 / MS32).